We begin with the raw amino-acid sequence, 247 residues long: Segregation and condensation protein A (247 aa).

It belongs to the ScpA family. In terms of assembly, component of a cohesin-like complex composed of ScpA, ScpB and the Smc homodimer, in which ScpA and ScpB bind to the head domain of Smc. The presence of the three proteins is required for the association of the complex with DNA.

Its subcellular location is the cytoplasm. Participates in chromosomal partition during cell division. May act via the formation of a condensin-like complex containing Smc and ScpB that pull DNA away from mid-cell into both cell halves. This is Segregation and condensation protein A from Lactobacillus johnsonii (strain CNCM I-12250 / La1 / NCC 533).